A 499-amino-acid polypeptide reads, in one-letter code: Acetylcholine receptor subunit alpha-type acr-16 (499 aa).

The first 19 residues, 1-19, serve as a signal peptide directing secretion; that stretch reads MSSVCALLLSCALFLVAHG. At 20 to 232 the chain is on the extracellular side; sequence SLQERRLYED…LHMRRRTLYY (213 aa). 2 N-linked (GlcNAc...) asparagine glycosylation sites follow: Asn43 and Asn93. 2 disulfide bridges follow: Cys147–Cys161 and Cys211–Cys212. A run of 3 helical transmembrane segments spans residues 233–253, 261–281, and 289–309; these read GFNL…GFTL, ITLQ…VSEM, and VPLL…STVF. Residues 310-473 are Cytoplasmic-facing; the sequence is TVYVLNLHYR…WKFAAMVVDR (164 aa). The chain crosses the membrane as a helical span at residues 474-494; sequence LCLYVFTIFIIASTIGIFWSA. Topologically, residues 495–499 are extracellular; the sequence is PYLVA.

This sequence belongs to the ligand-gated ion channel (TC 1.A.9) family. Acetylcholine receptor (TC 1.A.9.1) subfamily.

It is found in the postsynaptic cell membrane. Its subcellular location is the cell membrane. After binding acetylcholine, the AChR responds by an extensive change in conformation that affects all subunits and leads to opening of an ion-conducting channel across the plasma membrane. A subunit of the levamisole-insensitive nicotinic receptor. This Caenorhabditis briggsae protein is Acetylcholine receptor subunit alpha-type acr-16.